The primary structure comprises 317 residues: Glycine--tRNA ligase alpha subunit (317 aa).

It belongs to the class-II aminoacyl-tRNA synthetase family. Tetramer of two alpha and two beta subunits.

It is found in the cytoplasm. It carries out the reaction tRNA(Gly) + glycine + ATP = glycyl-tRNA(Gly) + AMP + diphosphate. This Lactococcus lactis subsp. cremoris (strain SK11) protein is Glycine--tRNA ligase alpha subunit.